A 394-amino-acid chain; its full sequence is Putative fimbrial assembly protein FimD, serogroup D (394 aa).

The protein is Putative fimbrial assembly protein FimD, serogroup D (fimD) of Dichelobacter nodosus (Bacteroides nodosus).